A 492-amino-acid chain; its full sequence is Target of Myb1 membrane trafficking protein (492 aa).

An N-acetylmethionine modification is found at Met1. Ser11 carries the post-translational modification Phosphoserine. A VHS domain is found at 20–152 (ATDGSLQSED…DLRRKGLEFP (133 aa)). The short motif at 48–56 (KDAFRAVKK) is the KRKK element. Residue Ser160 is modified to Phosphoserine. Position 164 is a phosphothreonine (Thr164). The span at 167-195 (RTVFNSETPSRQNSVSSNTSQRGDLSQHA) shows a compositional bias: polar residues. The interval 167 to 215 (RTVFNSETPSRQNSVSSNTSQRGDLSQHATPLPTPAVLPGDSPITPTPE) is disordered. 3 positions are modified to phosphoserine: Ser176, Ser180, and Ser208. One can recognise a GAT domain in the interval 215–303 (EQIGKLRSEL…VFLRHERFER (89 aa)). The tract at residues 321 to 326 (DLIDMG) is clathrin box. Ser355 and Ser376 each carry phosphoserine. Residue Lys385 forms a Glycyl lysine isopeptide (Lys-Gly) (interchain with G-Cter in SUMO2) linkage. The interval 392-463 (TDGLAGALDA…ADRLPNLASP (72 aa)) is interaction with MYO6. The interval 450-492 (RAKAADRLPNLASPSAEGPPRPSPGTAPRRKTQEKDDDMLFAL) is disordered. At Ser462 the chain carries Phosphoserine.

The protein belongs to the TOM1 family. As to quaternary structure, found in a complex with TOLLIP; interacts (via GAT domain) with TOLLIP (via N-terminus); the interactions leads to TOM1-recruitment to endosomes and inhibition of TOLLIP binding to PtdIns(3)P. Interacts (via GAT domain and the C-terminal part of the VHS domain) with UBC/ubiquitin. Interacts (via clathrin box and C-terminus) with clathrin heavy chain. Interacts with MYO6. Interacts with TAX1BP1; CALCOCO2/NDP52 and OPTN; the interaction is indirect and is mediated by MYO6, which acts as a bridge between TOM1 and the three autophagy receptors. Interacts (via C-terminus) with ZFYVE16 (via C-terminus); interaction is required to target TOM1 and clathrin to endosomes. Interacts with LRBA. Monoubiquitinated. In terms of tissue distribution, ubiquitous. In adult brain, it is highly expressed at the mesencephalic level, in the hippocampal formation and medial lemniscus. In cerebellum, it is highly expressed in Purkinje cells and granular layers.

Its subcellular location is the cytoplasm. The protein localises to the endosome membrane. It localises to the early endosome membrane. Its function is as follows. Adapter protein that plays a role in the intracellular membrane trafficking of ubiquitinated proteins, thereby participating in autophagy, ubiquitination-dependent signaling and receptor recycling pathways. Acts as a MYO6/Myosin VI adapter protein that targets MYO6 to endocytic structures. Together with MYO6, required for autophagosomal delivery of endocytic cargo, the maturation of autophagosomes and their fusion with lysosomes. MYO6 links TOM1 with autophagy receptors, such as TAX1BP1; CALCOCO2/NDP52 and OPTN. Binds to polyubiquitinated proteins via its GAT domain. In a complex with TOLLIP, recruits ubiquitin-conjugated proteins onto early endosomes. The Tom1-Tollip complex may regulate endosomal trafficking by linking polyubiquitinated proteins to clathrin. Mediates clathrin recruitment to early endosomes by ZFYVE16. Modulates binding of TOLLIP to phosphatidylinositol 3-phosphate (PtdIns(3)P) via binding competition; the association with TOLLIP may favor the release of TOLLIP from endosomal membranes, allowing TOLLIP to commit to cargo trafficking. Acts as a phosphatidylinositol 5-phosphate (PtdIns(5)P) effector by binding to PtdIns(5)P, thereby regulating endosomal maturation. PtdIns(5)P-dependent recruitment to signaling endosomes may block endosomal maturation. Also inhibits Toll-like receptor (TLR) signaling and participates in immune receptor recycling. In Mus musculus (Mouse), this protein is Target of Myb1 membrane trafficking protein.